A 79-amino-acid polypeptide reads, in one-letter code: Major outer membrane lipoprotein Lpp 3 (79 aa).

Positions 1–21 (MNRTNKLILGAVVLGSALLAG) are cleaved as a signal peptide. Cysteine 22 is lipidated: N-palmitoyl cysteine. A lipid anchor (S-diacylglycerol cysteine) is attached at cysteine 22. 2 repeats span residues 25–35 (NAKIDQLSSDV) and 39–49 (SAKVDQLSNDV). A coiled-coil region spans residues 28–76 (IDQLSSDVQTLSAKVDQLSNDVNAMRSDVQAAKDDAARANQRLDNKVLR). Lysine 79 is modified (N6-murein peptidoglycan lysine).

The protein belongs to the Lpp family. In terms of assembly, homotrimer.

It is found in the cell outer membrane. The protein resides in the secreted. Its subcellular location is the cell wall. Functionally, a highly abundant outer membrane lipoprotein that controls the distance between the inner and outer membranes. The only protein known to be covalently linked to the peptidoglycan network (PGN). Also non-covalently binds the PGN. The link between the cell outer membrane and PGN contributes to maintenance of the structural and functional integrity of the cell envelope, and maintains the correct distance between the PGN and the outer membrane. In Salmonella paratyphi A (strain ATCC 9150 / SARB42), this protein is Major outer membrane lipoprotein Lpp 3.